The sequence spans 231 residues: tRNA (guanine-N(7)-)-methyltransferase (231 aa).

S-adenosyl-L-methionine contacts are provided by E62, E87, D114, and D136. The active site involves D136. Substrate-binding positions include K140, D172, and 210 to 213; that span reads TRYE.

This sequence belongs to the class I-like SAM-binding methyltransferase superfamily. TrmB family.

The catalysed reaction is guanosine(46) in tRNA + S-adenosyl-L-methionine = N(7)-methylguanosine(46) in tRNA + S-adenosyl-L-homocysteine. It participates in tRNA modification; N(7)-methylguanine-tRNA biosynthesis. In terms of biological role, catalyzes the formation of N(7)-methylguanine at position 46 (m7G46) in tRNA. This is tRNA (guanine-N(7)-)-methyltransferase from Zymomonas mobilis subsp. mobilis (strain ATCC 31821 / ZM4 / CP4).